The sequence spans 299 residues: Tyrosine recombinase XerC (299 aa).

The Core-binding (CB) domain maps to 1-85 (MERQLEAYCA…AVRGLYRYLN (85 aa)). The region spanning 106-285 (RLPKVLDTDR…DFQHLAAVYD (180 aa)) is the Tyr recombinase domain. Catalysis depends on residues arginine 146, lysine 170, histidine 237, arginine 240, and histidine 263. Tyrosine 272 acts as the O-(3'-phospho-DNA)-tyrosine intermediate in catalysis.

It belongs to the 'phage' integrase family. XerC subfamily. As to quaternary structure, forms a cyclic heterotetrameric complex composed of two molecules of XerC and two molecules of XerD.

Its subcellular location is the cytoplasm. In terms of biological role, site-specific tyrosine recombinase, which acts by catalyzing the cutting and rejoining of the recombining DNA molecules. The XerC-XerD complex is essential to convert dimers of the bacterial chromosome into monomers to permit their segregation at cell division. It also contributes to the segregational stability of plasmids. In Pseudomonas putida (strain W619), this protein is Tyrosine recombinase XerC.